The following is a 473-amino-acid chain: Mitochondrial distribution and morphology protein 10 (473 aa).

Belongs to the MDM10 family. Component of the ER-mitochondria encounter structure (ERMES) or MDM complex, composed of MMM1, MDM10, MDM12 and MDM34. Associates with the mitochondrial outer membrane sorting assembly machinery SAM(core) complex.

The protein resides in the mitochondrion outer membrane. In terms of biological role, component of the ERMES/MDM complex, which serves as a molecular tether to connect the endoplasmic reticulum and mitochondria. Components of this complex are involved in the control of mitochondrial shape and protein biogenesis and may function in phospholipid exchange. MDM10 is involved in the late assembly steps of the general translocase of the mitochondrial outer membrane (TOM complex). Functions in the TOM40-specific route of the assembly of outer membrane beta-barrel proteins, including the association of TOM40 with the receptor TOM22 and small TOM proteins. Can associate with the SAM(core) complex as well as the MDM12-MMM1 complex, both involved in late steps of the major beta-barrel assembly pathway, that is responsible for biogenesis of all outer membrane beta-barrel proteins. May act as a switch that shuttles between both complexes and channels precursor proteins into the TOM40-specific pathway. Plays a role in mitochondrial morphology and in the inheritance of mitochondria. This chain is Mitochondrial distribution and morphology protein 10, found in Candida albicans (strain WO-1) (Yeast).